A 345-amino-acid chain; its full sequence is L-rhamnose-proton symporter (345 aa).

10 consecutive transmembrane segments (helical) span residues 4 to 24 (AITM…CFYA), 38 to 58 (WSVG…ALLL), 68 to 88 (FSAA…IGNI), 101 to 121 (MGIG…TPLL), 131 to 151 (TAGG…VAIV), 175 to 195 (LVLA…MDAA), 214 to 234 (LPSY…FCFI), 259 to 279 (VLLS…YAWG), 290 to 310 (ISWM…GLLL), and 323 to 343 (VLSL…LGMA).

This sequence belongs to the L-rhamnose transporter (TC 2.A.7.6) family.

Its subcellular location is the cell inner membrane. It catalyses the reaction L-rhamnopyranose(in) + H(+)(in) = L-rhamnopyranose(out) + H(+)(out). Uptake of L-rhamnose across the cytoplasmic membrane with the concomitant transport of protons into the cell (symport system). This is L-rhamnose-proton symporter from Cronobacter sakazakii (strain ATCC BAA-894) (Enterobacter sakazakii).